Here is a 621-residue protein sequence, read N- to C-terminus: Intermediate filament protein ifc-2 (621 aa).

The head stretch occupies residues 20–55 (SGAYTSGFGGLVSGMSSAGAICTTQIRDAREREKRE). In terms of domain architecture, IF rod spans 52–400 (EKREIGLLND…VLLNGANVTT (349 aa)). Residues 56–87 (IGLLNDRLADYIEKVRFLEAQNQCLSHDIDIL) form a coil 1A region. Residues 88–100 (RRGFSGGGHVSGL) are linker 1. The segment at 101-238 (YDTEIAQAKR…TENSTRIEQE (138 aa)) is coil 1B. The interval 239 to 256 (LVFIRRDTTAENRDYFRH) is linker 12. Residues 257 to 400 (ELQAAIRDIR…VLLNGANVTT (144 aa)) form a coil 2 region. The interval 401–549 (YVSNTHPSGV…RVDVGGFRVE (149 aa)) is tail. The region spanning 508–621 (SGRSFHSWYL…EERAWFVYLN (114 aa)) is the LTD domain.

This sequence belongs to the intermediate filament family.

It localises to the cytoplasm. Functionally, cytoplasmic intermediate filaments provide mechanical strength to cells. The protein is Intermediate filament protein ifc-2 of Caenorhabditis briggsae.